Reading from the N-terminus, the 283-residue chain is Elongation factor Ts (283 aa).

Residues 80–83 are involved in Mg(2+) ion dislocation from EF-Tu; that stretch reads TDFV.

Belongs to the EF-Ts family.

It is found in the cytoplasm. Associates with the EF-Tu.GDP complex and induces the exchange of GDP to GTP. It remains bound to the aminoacyl-tRNA.EF-Tu.GTP complex up to the GTP hydrolysis stage on the ribosome. This chain is Elongation factor Ts, found in Salmonella gallinarum (strain 287/91 / NCTC 13346).